Consider the following 334-residue polypeptide: Holliday junction branch migration complex subunit RuvB (334 aa).

Residues 4-186 (ADRLIAPENP…FGITQRLEYY (183 aa)) form a large ATPase domain (RuvB-L) region. ATP contacts are provided by residues Ile25, Arg26, Gly67, Lys70, Thr71, Thr72, 133-135 (EDY), Arg176, Tyr186, and Arg223. Residue Thr71 coordinates Mg(2+). The small ATPAse domain (RuvB-S) stretch occupies residues 187 to 257 (KVQDLQNIVQ…VADKALNMLD (71 aa)). Residues 260–334 (AQGFDYMDRK…RAYLHFGIEK (75 aa)) form a head domain (RuvB-H) region. Arg315 and Arg320 together coordinate DNA.

This sequence belongs to the RuvB family. In terms of assembly, homohexamer. Forms an RuvA(8)-RuvB(12)-Holliday junction (HJ) complex. HJ DNA is sandwiched between 2 RuvA tetramers; dsDNA enters through RuvA and exits via RuvB. An RuvB hexamer assembles on each DNA strand where it exits the tetramer. Each RuvB hexamer is contacted by two RuvA subunits (via domain III) on 2 adjacent RuvB subunits; this complex drives branch migration. In the full resolvosome a probable DNA-RuvA(4)-RuvB(12)-RuvC(2) complex forms which resolves the HJ.

The protein localises to the cytoplasm. It carries out the reaction ATP + H2O = ADP + phosphate + H(+). The RuvA-RuvB-RuvC complex processes Holliday junction (HJ) DNA during genetic recombination and DNA repair, while the RuvA-RuvB complex plays an important role in the rescue of blocked DNA replication forks via replication fork reversal (RFR). RuvA specifically binds to HJ cruciform DNA, conferring on it an open structure. The RuvB hexamer acts as an ATP-dependent pump, pulling dsDNA into and through the RuvAB complex. RuvB forms 2 homohexamers on either side of HJ DNA bound by 1 or 2 RuvA tetramers; 4 subunits per hexamer contact DNA at a time. Coordinated motions by a converter formed by DNA-disengaged RuvB subunits stimulates ATP hydrolysis and nucleotide exchange. Immobilization of the converter enables RuvB to convert the ATP-contained energy into a lever motion, pulling 2 nucleotides of DNA out of the RuvA tetramer per ATP hydrolyzed, thus driving DNA branch migration. The RuvB motors rotate together with the DNA substrate, which together with the progressing nucleotide cycle form the mechanistic basis for DNA recombination by continuous HJ branch migration. Branch migration allows RuvC to scan DNA until it finds its consensus sequence, where it cleaves and resolves cruciform DNA. This Vibrio parahaemolyticus serotype O3:K6 (strain RIMD 2210633) protein is Holliday junction branch migration complex subunit RuvB.